The chain runs to 125 residues: MEQLPSHPTNRRAKEEGNAVPLCRAKPSPSFINLQASSPPVTLLKILPTKLPSGINHKPKECLGLLECMYANLQLQTQLAQQQMAILENLQASKTQLAPGKENKNSSLPALSRNLLLSHLPQFSK.

A disordered region spans residues 1–22 (MEQLPSHPTNRRAKEEGNAVPL).

It belongs to the TSACC family. In terms of assembly, interacts with HSP70. Associates with HSP90. Interacts with TSSK6; this interaction is direct and recruits TSACC to HSP90.

Co-chaperone that facilitates HSP-mediated activation of TSSK6. In Bos taurus (Bovine), this protein is TSSK6-activating co-chaperone protein (TSACC).